A 1584-amino-acid chain; its full sequence is Dicer-like protein 1 (1584 aa).

Residues E31–E60 are disordered. The 182-residue stretch at L129–L310 folds into the Helicase ATP-binding domain. ATP is bound at residue L142–T149. A DEAH box motif is present at residues D255–H258. The region spanning K448–T621 is the Helicase C-terminal domain. The region spanning S654–E744 is the Dicer dsRNA-binding fold domain. The PAZ domain maps to K894–P1028. RNase III domains are found at residues V1052–Q1207 and A1258–E1424. Mg(2+) contacts are provided by E1298, D1410, and E1413. Positions T1458 to G1545 constitute a DRBM domain. Zn(2+) is bound by residues C1470, H1516, C1557, and C1559.

This sequence belongs to the helicase family. Dicer subfamily. It depends on Mg(2+) as a cofactor. The cofactor is Mn(2+).

Dicer-like endonuclease involved in cleaving double-stranded RNA in the RNA interference (RNAi) pathway. Produces 21 to 25 bp dsRNAs (siRNAs) which target the selective destruction of homologous RNAs leading to sequence-specific suppression of gene expression, called post-transcriptional gene silencing (PTGS). Part of a broad host defense response against viral infection and transposons. Controls the expression of the non-LTR retrotransposon Tad in the African strain, Adiomopoume. This Neurospora crassa (strain ATCC 24698 / 74-OR23-1A / CBS 708.71 / DSM 1257 / FGSC 987) protein is Dicer-like protein 1 (dcl-1).